Consider the following 156-residue polypeptide: Small ribosomal subunit protein uS7 (156 aa).

Belongs to the universal ribosomal protein uS7 family. Part of the 30S ribosomal subunit. Contacts proteins S9 and S11.

One of the primary rRNA binding proteins, it binds directly to 16S rRNA where it nucleates assembly of the head domain of the 30S subunit. Is located at the subunit interface close to the decoding center, probably blocks exit of the E-site tRNA. This is Small ribosomal subunit protein uS7 from Vibrio campbellii (strain ATCC BAA-1116).